The following is a 504-amino-acid chain: ATP synthase subunit alpha 1 (504 aa).

172-179 (GDRQTGKT) is a binding site for ATP.

This sequence belongs to the ATPase alpha/beta chains family. In terms of assembly, F-type ATPases have 2 components, CF(1) - the catalytic core - and CF(0) - the membrane proton channel. CF(1) has five subunits: alpha(3), beta(3), gamma(1), delta(1), epsilon(1). CF(0) has three main subunits: a(1), b(2) and c(9-12). The alpha and beta chains form an alternating ring which encloses part of the gamma chain. CF(1) is attached to CF(0) by a central stalk formed by the gamma and epsilon chains, while a peripheral stalk is formed by the delta and b chains.

It is found in the cell inner membrane. The catalysed reaction is ATP + H2O + 4 H(+)(in) = ADP + phosphate + 5 H(+)(out). Functionally, produces ATP from ADP in the presence of a proton gradient across the membrane. The alpha chain is a regulatory subunit. The protein is ATP synthase subunit alpha 1 of Rhodopirellula baltica (strain DSM 10527 / NCIMB 13988 / SH1).